The sequence spans 160 residues: Calcium-binding protein CP1 (160 aa).

EF-hand domains follow at residues alanine 22–glycine 49, asparagine 52–serine 87, and glycine 93–alanine 128. 14 residues coordinate Ca(2+): aspartate 27, aspartate 29, aspartate 31, lysine 33, aspartate 38, aspartate 65, asparagine 67, aspartate 69, glutamate 76, aspartate 106, aspartate 108, aspartate 110, arginine 112, and aspartate 117.

In terms of tissue distribution, expressed in roots and flowers.

It is found in the cytoplasm. The protein resides in the cytosol. Binds calcium in vitro. In Arabidopsis thaliana (Mouse-ear cress), this protein is Calcium-binding protein CP1.